Consider the following 340-residue polypeptide: Chitinase 2 (340 aa).

Residues 1 to 32 (MSTPRAAASLAKKAALVALAVLAAALATAARA) form the signal peptide. The Chitin-binding type-1 domain maps to 33–73 (EQCGAQAGGARCPNCLCCSRWGWCGTTSDFCGDGCQSQCSG). 8 cysteine pairs are disulfide-bonded: Cys-35–Cys-50, Cys-44–Cys-56, Cys-47–Cys-74, Cys-49–Cys-63, Cys-67–Cys-71, Cys-110–Cys-172, Cys-184–Cys-192, and Cys-291–Cys-323. Glu-154 serves as the catalytic Proton donor.

This sequence belongs to the glycosyl hydrolase 19 family. Chitinase class I subfamily. As to expression, expressed in roots, sheaths and meristems.

The enzyme catalyses Random endo-hydrolysis of N-acetyl-beta-D-glucosaminide (1-&gt;4)-beta-linkages in chitin and chitodextrins.. Its function is as follows. Hydrolyzes chitin and plays a role in defense against fungal pathogens containing chitin. Its overexpression confers enhanced resistance to sheath blight pathogen (R.solani). The protein is Chitinase 2 (Cht2) of Oryza sativa subsp. japonica (Rice).